The primary structure comprises 494 residues: tRNA (guanine(37)-N(1))-methyltransferase (494 aa).

Residues 1–32 (MRIRRILYFYGNLPNTYTANVLRRLAFSCWHT) constitute a mitochondrion transit peptide. S-adenosyl-L-methionine contacts are provided by residues His278, 316–317 (DL), 344–345 (DG), and Asn377. The disordered stretch occupies residues 468–494 (DTGEPESKRPRTAEAFPLPHVQQSRNS).

The protein belongs to the class I-like SAM-binding methyltransferase superfamily. TRM5/TYW2 family. Monomer.

It localises to the mitochondrion matrix. The protein resides in the nucleus. The protein localises to the cytoplasm. It catalyses the reaction guanosine(37) in tRNA + S-adenosyl-L-methionine = N(1)-methylguanosine(37) in tRNA + S-adenosyl-L-homocysteine + H(+). Functionally, involved in mitochondrial tRNA methylation. Specifically methylates the N1 position of guanosine-37 in various tRNAs. Methylation is not dependent on the nature of the nucleoside 5' of the target nucleoside. This is the first step in the biosynthesis of wybutosine (yW), a modified base adjacent to the anticodon of tRNAs and required for accurate decoding. This Xenopus tropicalis (Western clawed frog) protein is tRNA (guanine(37)-N(1))-methyltransferase (trmt5).